The chain runs to 124 residues: Small ribosomal subunit protein uS12c (124 aa).

Belongs to the universal ribosomal protein uS12 family. As to quaternary structure, part of the 30S ribosomal subunit.

It is found in the plastid. Its subcellular location is the chloroplast. In terms of biological role, with S4 and S5 plays an important role in translational accuracy. Located at the interface of the 30S and 50S subunits. This is Small ribosomal subunit protein uS12c (rps12) from Oryza nivara (Indian wild rice).